The primary structure comprises 229 residues: Peptidase E (229 aa).

Catalysis depends on charge relay system residues Ser-120, Asp-135, and His-157.

The protein belongs to the peptidase S51 family.

The protein resides in the cytoplasm. The enzyme catalyses Dipeptidase E catalyzes the hydrolysis of dipeptides Asp-|-Xaa. It does not act on peptides with N-terminal Glu, Asn or Gln, nor does it cleave isoaspartyl peptides.. Its function is as follows. Hydrolyzes dipeptides containing N-terminal aspartate residues. May play a role in allowing the cell to use peptide aspartate to spare carbon otherwise required for the synthesis of the aspartate family of amino acids. The sequence is that of Peptidase E from Salmonella paratyphi C (strain RKS4594).